We begin with the raw amino-acid sequence, 422 residues long: Elongation factor 1-alpha (422 aa).

A tr-type G domain is found at 5-221 (KPHMNLAVIG…NSLKEPEKPS (217 aa)). Positions 14 to 21 (GHIDHGKS) are G1. A GTP-binding site is contributed by 14 to 21 (GHIDHGKS). S21 contributes to the Mg(2+) binding site. The tract at residues 70-74 (GITID) is G2. A G3 region spans residues 91–94 (DCPG). Residues 91–95 (DCPGH) and 146–149 (NKMD) each bind GTP. The tract at residues 146 to 149 (NKMD) is G4. The interval 185–187 (SAF) is G5.

It belongs to the TRAFAC class translation factor GTPase superfamily. Classic translation factor GTPase family. EF-Tu/EF-1A subfamily.

The protein localises to the cytoplasm. The catalysed reaction is GTP + H2O = GDP + phosphate + H(+). GTP hydrolase that promotes the GTP-dependent binding of aminoacyl-tRNA to the A-site of ribosomes during protein biosynthesis. The polypeptide is Elongation factor 1-alpha (Methanosarcina mazei (strain ATCC BAA-159 / DSM 3647 / Goe1 / Go1 / JCM 11833 / OCM 88) (Methanosarcina frisia)).